The following is a 654-amino-acid chain: Macrolide export ATP-binding/permease protein MacB (654 aa).

The ABC transporter domain maps to I6 to A244. Residue G42–S49 participates in ATP binding. 4 helical membrane passes run L279–G299, I534–V554, M584–F604, and V617–L637.

This sequence belongs to the ABC transporter superfamily. Macrolide exporter (TC 3.A.1.122) family. As to quaternary structure, homodimer. Part of the tripartite efflux system MacAB-TolC, which is composed of an inner membrane transporter, MacB, a periplasmic membrane fusion protein, MacA, and an outer membrane component, TolC. The complex forms a large protein conduit and can translocate molecules across both the inner and outer membranes. Interacts with MacA.

It is found in the cell inner membrane. Part of the tripartite efflux system MacAB-TolC. MacB is a non-canonical ABC transporter that contains transmembrane domains (TMD), which form a pore in the inner membrane, and an ATP-binding domain (NBD), which is responsible for energy generation. Confers resistance against macrolides. In Hahella chejuensis (strain KCTC 2396), this protein is Macrolide export ATP-binding/permease protein MacB.